Reading from the N-terminus, the 352-residue chain is Probable RNA methyltransferase CV_2253 (352 aa).

E91 acts as the Proton acceptor in catalysis. One can recognise a Radical SAM core domain in the interval L94–D320. A disulfide bridge connects residues C101 and C325. The [4Fe-4S] cluster site is built by C108, C112, and C115. S-adenosyl-L-methionine-binding positions include G153 to E154, S183, S206 to H208, and N282. C325 functions as the S-methylcysteine intermediate in the catalytic mechanism.

It belongs to the radical SAM superfamily. RlmN family. The cofactor is [4Fe-4S] cluster.

Its subcellular location is the cytoplasm. This Chromobacterium violaceum (strain ATCC 12472 / DSM 30191 / JCM 1249 / CCUG 213 / NBRC 12614 / NCIMB 9131 / NCTC 9757 / MK) protein is Probable RNA methyltransferase CV_2253.